A 388-amino-acid chain; its full sequence is Dipeptidase verJ (388 aa).

Positions 29, 31, and 142 each coordinate Zn(2+). Substrate is bound by residues His-169, Arg-243, and Asp-300.

This sequence belongs to the metallo-dependent hydrolases superfamily. Peptidase M19 family. The cofactor is Zn(2+).

It catalyses the reaction an L-aminoacyl-L-amino acid + H2O = 2 an L-alpha-amino acid. It participates in mycotoxin biosynthesis. Dipeptidase; part of the gene cluster that mediates the biosynthesis of 11'-deoxyverticillin A, one of the dimeric epipolythiodioxopiperazines (ETPs) from the verticillin family that act as mycotoxins. 11'-deoxyverticillin A is required for normal conidiation. The nonribosomal peptide synthetase verP is speculated to be responsible for condensation of amino acids to form the carbon skeleton of verticillin, whereas the cluster-specific tailoring enzymes are involved in further modifications leading to the production of 11'-deoxyverticillin A. This is Dipeptidase verJ from Clonostachys rogersoniana.